Here is a 147-residue protein sequence, read N- to C-terminus: Lysozyme C (147 aa).

An N-terminal signal peptide occupies residues 1–18 (MKFFLILGFCLLPLIAQG). The region spanning 19–147 (KVFQRCELAA…VSQWIRGCRV (129 aa)) is the C-type lysozyme domain. Intrachain disulfides connect cysteine 24-cysteine 145, cysteine 48-cysteine 133, cysteine 82-cysteine 98, and cysteine 94-cysteine 112. Residues glutamate 53 and aspartate 70 contribute to the active site. Residue aspartate 119 coordinates substrate.

This sequence belongs to the glycosyl hydrolase 22 family. As to quaternary structure, monomer. As to expression, expressed in liver and ovary. Not expressed in bone marrow, lung, spleen, intestine or oviduct.

The protein resides in the secreted. The catalysed reaction is Hydrolysis of (1-&gt;4)-beta-linkages between N-acetylmuramic acid and N-acetyl-D-glucosamine residues in a peptidoglycan and between N-acetyl-D-glucosamine residues in chitodextrins.. In terms of biological role, lysozymes have primarily a bacteriolytic function; those in tissues and body fluids are associated with the monocyte-macrophage system and enhance the activity of immunoagents. Has bacteriolytic activity against M.luteus. The sequence is that of Lysozyme C from Dromaius novaehollandiae (Emu).